A 194-amino-acid polypeptide reads, in one-letter code: uncharacterized protein (194 aa).

The 166-residue stretch at 20 to 185 folds into the Exonuclease domain; the sequence is RIFIDTETTG…ADCRMTLGII (166 aa).

This is an uncharacterized protein from Escherichia coli (Bacteriophage 186).